The sequence spans 556 residues: MCGAHFVAIALLVAAGCQTAAEFDQDDIQQTSKDDSMASIDLLQSRNLRESRDSKDDLLSAGDEERTPPFPSGVLKEPKVADSTMAAANVMRTEGEASAIKAASKNLNQLKSNKPQRIAPASRSVAGQVLHSSPDSDKSLVSVENEQLLVLAKRRRTKHPTAMMTNAVRSAEQHDYRLAPTESSTLPAQASDGQLSKQLITQKVLQLDKKKHVDESLWREELMTVDEVLHLLETFDKPAHPTAVNVHEANAIGIATKKLNYLRRNKRKRIAPTSNNVVGQVPHAQPDPDKSPVLVAKDIPSVLAKRLRTDHPTAIMENAARFVTQHNYRLAPTGPSTIIAATPNSQLKYHLPGQKALHLDKNEHAGDLKSLRNEESHTIEHILHLRERNDKSAHTTAENHQSVPEDWNTVSAKGPKLLSKDSINEKVKKVHAAFVEAFNLPFHQYPEETAMMLKLVQRKTKSSPNNGETYDAFMYMAELQQHSSHLRKLLGPDLKMLLGTDKTVLPIKLENLQEAYNVKLVIMYDLFFEFCHDRKDLVEGLPRKPKPNQWILKLST.

Residues methionine 1–threonine 19 form the signal peptide. Disordered regions lie at residues leucine 43 to lysine 76, asparagine 108 to lysine 138, and asparagine 389 to asparagine 408. A RxLR-dEER motif is present at residues arginine 46–arginine 66. Residues asparagine 47–threonine 67 show a composition bias toward basic and acidic residues.

Belongs to the RxLR effector family.

The protein resides in the secreted. Its subcellular location is the host cell. Its function is as follows. Secreted effector that partially suppresses the host cell death induced by cell death-inducing proteins. The sequence is that of Secreted RxLR effector protein 114 from Plasmopara viticola (Downy mildew of grapevine).